We begin with the raw amino-acid sequence, 219 residues long: Tetratricopeptide repeat protein 9A (219 aa).

A disordered region spans residues methionine 1–proline 49. Residues alanine 56–leucine 89 form a TPR 1 repeat. A disordered region spans residues glutamate 94–glutamate 115. Residue serine 102 is modified to Phosphoserine. TPR repeat units lie at residues isoleucine 125–asparagine 160 and phenylalanine 161–aspartate 194.

It belongs to the TTC9 family.

The sequence is that of Tetratricopeptide repeat protein 9A (Ttc9) from Mus musculus (Mouse).